The sequence spans 336 residues: Dihydroorotate dehydrogenase (quinone) (336 aa).

FMN contacts are provided by residues 62 to 66 and threonine 86; that span reads AGLDK. Position 66 (lysine 66) interacts with substrate. 111-115 is a substrate binding site; the sequence is NRMGF. Residues asparagine 139 and asparagine 172 each contribute to the FMN site. Residue asparagine 172 coordinates substrate. Serine 175 serves as the catalytic Nucleophile. Asparagine 177 contacts substrate. Positions 217 and 245 each coordinate FMN. Position 246 to 247 (246 to 247) interacts with substrate; the sequence is NT. FMN contacts are provided by residues glycine 268, glycine 297, and 318-319; that span reads YS.

This sequence belongs to the dihydroorotate dehydrogenase family. Type 2 subfamily. As to quaternary structure, monomer. FMN is required as a cofactor.

The protein localises to the cell membrane. The catalysed reaction is (S)-dihydroorotate + a quinone = orotate + a quinol. It functions in the pathway pyrimidine metabolism; UMP biosynthesis via de novo pathway; orotate from (S)-dihydroorotate (quinone route): step 1/1. Functionally, catalyzes the conversion of dihydroorotate to orotate with quinone as electron acceptor. In Salmonella gallinarum (strain 287/91 / NCTC 13346), this protein is Dihydroorotate dehydrogenase (quinone).